Consider the following 223-residue polypeptide: Cutinase 4 (223 aa).

Positions 1–26 (MPLPLLPPLLLPLEALLDLALHLVDS) are cleaved as a signal peptide. Cys-60 and Cys-133 are joined by a disulfide. The active-site Nucleophile is the Ser-144. Cys-187 and Cys-194 are joined by a disulfide. The active site involves Asp-191. His-203 acts as the Proton donor/acceptor in catalysis.

It belongs to the cutinase family. Post-translationally, the 2 disulfide bonds play a critical role in holding the catalytic residues in juxta-position; reduction of the disulfide bridges results in the complete inactivation of the enzyme.

Its subcellular location is the secreted. The catalysed reaction is cutin + H2O = cutin monomers.. Catalyzes the hydrolysis of complex carboxylic polyesters found in the cell wall of plants. Degrades cutin, a macromolecule that forms the structure of the plant cuticle. Also degrades suberin, a specialized macromolecule found in the cell wall of various plant tissues. The protein is Cutinase 4 of Emericella nidulans (strain FGSC A4 / ATCC 38163 / CBS 112.46 / NRRL 194 / M139) (Aspergillus nidulans).